The chain runs to 281 residues: Bifunctional protein FolD (281 aa).

NADP(+)-binding positions include 165-167, threonine 192, and valine 233; that span reads GRG.

The protein belongs to the tetrahydrofolate dehydrogenase/cyclohydrolase family. Homodimer.

It carries out the reaction (6R)-5,10-methylene-5,6,7,8-tetrahydrofolate + NADP(+) = (6R)-5,10-methenyltetrahydrofolate + NADPH. The catalysed reaction is (6R)-5,10-methenyltetrahydrofolate + H2O = (6R)-10-formyltetrahydrofolate + H(+). It functions in the pathway one-carbon metabolism; tetrahydrofolate interconversion. Catalyzes the oxidation of 5,10-methylenetetrahydrofolate to 5,10-methenyltetrahydrofolate and then the hydrolysis of 5,10-methenyltetrahydrofolate to 10-formyltetrahydrofolate. The chain is Bifunctional protein FolD from Mycobacterium bovis (strain BCG / Tokyo 172 / ATCC 35737 / TMC 1019).